A 256-amino-acid polypeptide reads, in one-letter code: MKSIVDPSALVIDLGAQKRPTVISVVGAGGKTSLLFWLAELLQASGRRVLITTTTHMFMPTSHWPVVFCRDPAMLPHASLTSPISFCFHSWKANQGKVQGFTPEAIDALVQRPECDVILIEADGSRGMPLKAPDEHEPCIPKSSCCVIAVMGGHTLGAKVSTENVHRWSQFADITGLTPDATLQLSDLVALVRHPQGAFKNVPQGCRRVWFINRFSQCENAIAQSELLQPLQQHDVEAIWLGDIQEHPAIARRFVN.

This is an uncharacterized protein from Escherichia coli (strain K12).